The sequence spans 417 residues: Gamma-glutamyl phosphate reductase (417 aa).

The protein belongs to the gamma-glutamyl phosphate reductase family.

Its subcellular location is the cytoplasm. The enzyme catalyses L-glutamate 5-semialdehyde + phosphate + NADP(+) = L-glutamyl 5-phosphate + NADPH + H(+). The protein operates within amino-acid biosynthesis; L-proline biosynthesis; L-glutamate 5-semialdehyde from L-glutamate: step 2/2. In terms of biological role, catalyzes the NADPH-dependent reduction of L-glutamate 5-phosphate into L-glutamate 5-semialdehyde and phosphate. The product spontaneously undergoes cyclization to form 1-pyrroline-5-carboxylate. The protein is Gamma-glutamyl phosphate reductase of Clostridium novyi (strain NT).